The primary structure comprises 127 residues: Large ribosomal subunit protein bL17 (127 aa).

The protein belongs to the bacterial ribosomal protein bL17 family. Part of the 50S ribosomal subunit. Contacts protein L32.

This chain is Large ribosomal subunit protein bL17, found in Pediococcus pentosaceus (strain ATCC 25745 / CCUG 21536 / LMG 10740 / 183-1w).